The chain runs to 95 residues: Aspartyl/glutamyl-tRNA(Asn/Gln) amidotransferase subunit C (95 aa).

The protein belongs to the GatC family. In terms of assembly, heterotrimer of A, B and C subunits.

The catalysed reaction is L-glutamyl-tRNA(Gln) + L-glutamine + ATP + H2O = L-glutaminyl-tRNA(Gln) + L-glutamate + ADP + phosphate + H(+). The enzyme catalyses L-aspartyl-tRNA(Asn) + L-glutamine + ATP + H2O = L-asparaginyl-tRNA(Asn) + L-glutamate + ADP + phosphate + 2 H(+). Allows the formation of correctly charged Asn-tRNA(Asn) or Gln-tRNA(Gln) through the transamidation of misacylated Asp-tRNA(Asn) or Glu-tRNA(Gln) in organisms which lack either or both of asparaginyl-tRNA or glutaminyl-tRNA synthetases. The reaction takes place in the presence of glutamine and ATP through an activated phospho-Asp-tRNA(Asn) or phospho-Glu-tRNA(Gln). This chain is Aspartyl/glutamyl-tRNA(Asn/Gln) amidotransferase subunit C, found in Hydrogenovibrio crunogenus (strain DSM 25203 / XCL-2) (Thiomicrospira crunogena).